Here is a 244-residue protein sequence, read N- to C-terminus: Large ribosomal subunit protein uL3 (244 aa).

The tract at residues 215-244 is disordered; the sequence is KKPPRERRGFAGSSTVDPLKASKRAVAKKK. The segment covering 235-244 has biased composition (basic residues); it reads ASKRAVAKKK.

It belongs to the universal ribosomal protein uL3 family. In terms of assembly, part of the 50S ribosomal subunit. Forms a cluster with proteins L14 and L19.

One of the primary rRNA binding proteins, it binds directly near the 3'-end of the 23S rRNA, where it nucleates assembly of the 50S subunit. This chain is Large ribosomal subunit protein uL3, found in Koribacter versatilis (strain Ellin345).